The sequence spans 337 residues: N-acetyl-gamma-glutamyl-phosphate reductase (337 aa).

Cysteine 155 is a catalytic residue.

The protein belongs to the NAGSA dehydrogenase family. Type 1 subfamily.

The protein localises to the cytoplasm. It catalyses the reaction N-acetyl-L-glutamate 5-semialdehyde + phosphate + NADP(+) = N-acetyl-L-glutamyl 5-phosphate + NADPH + H(+). Its pathway is amino-acid biosynthesis; L-arginine biosynthesis; N(2)-acetyl-L-ornithine from L-glutamate: step 3/4. Catalyzes the NADPH-dependent reduction of N-acetyl-5-glutamyl phosphate to yield N-acetyl-L-glutamate 5-semialdehyde. In Alteromonas mediterranea (strain DSM 17117 / CIP 110805 / LMG 28347 / Deep ecotype), this protein is N-acetyl-gamma-glutamyl-phosphate reductase.